The sequence spans 497 residues: MTAEKLVVYNTLTRKKEVFEPIHAPHVGMYVCGPTVYGEGHLGHARSAITFDIVFRYLQHLKYQVRYVRNITDVGHLEHDADEGEDKIAKKAKLEKVEPMEIVQRYTEYYHDALRKLNVLPPSIEPTASGHIPEQIRMVEEILSSGYAYENTGSVYFDVEKFTNDKNKYGHLSGRILEDLISGTRSLDGQHTKKSSADFALWKLASPEHIMKWDSPWGKGFPGWHLECSAMSTKYLGETFDIHGGGMDLMFPHHECEIAQSVAANKKEPAKYWLHNNMITINGQKMGKSLGNFITLNELFTGNHTLLEQAYSPMTIRFFTLQAHYRSTLDFSNDALKAANKAFRKVMNGMKMLNSLEYSTDIVEQDQALNDEINKIIADCYKGMSDDFNTAITIASLFNLIKKINVFYLQQKSTAVLSKETFEHMKTSYTTLVHDVLGLVDEVAVNPEGLIKGLLDLYKEAKENKQYDKVDQIRAYFKQQGLAIKDMKHGIDWAYEE.

Cysteine 32 contacts Zn(2+). The short motif at 34–44 (PTVYGEGHLGH) is the 'HIGH' region element. Zn(2+)-binding residues include cysteine 228, histidine 253, and glutamate 257. A 'KMSKS' region motif is present at residues 285-289 (KMGKS). ATP is bound at residue lysine 288.

It belongs to the class-I aminoacyl-tRNA synthetase family. In terms of assembly, monomer. It depends on Zn(2+) as a cofactor.

Its subcellular location is the cytoplasm. It catalyses the reaction tRNA(Cys) + L-cysteine + ATP = L-cysteinyl-tRNA(Cys) + AMP + diphosphate. The polypeptide is Cysteine--tRNA ligase (Cytophaga hutchinsonii (strain ATCC 33406 / DSM 1761 / CIP 103989 / NBRC 15051 / NCIMB 9469 / D465)).